Consider the following 227-residue polypeptide: Response regulator protein TodT (227 aa).

Residues 28–142 (VIYILDDDNA…ELLGAIRAAL (115 aa)) enclose the Response regulatory domain. The residue at position 77 (Asp77) is a 4-aspartylphosphate. Residues 158–223 (LKENYESLSK…DLVRVTERLK (66 aa)) form the HTH luxR-type domain. Positions 182 to 201 (NKQTALELDISEATVKVHRH) form a DNA-binding region, H-T-H motif.

In terms of processing, phosphorylated by TodS.

Its subcellular location is the cytoplasm. Its function is as follows. Member of the two-component regulatory system TodS/TodT involved in the regulation of toluene degradation. Phosphorylated TodT activates transcription of the tod operon (todXFC1C2BADEGIH). Binds specifically to a 6-bp palindromic DNA structure in the tod promoter region. In Pseudomonas putida (strain ATCC 700007 / DSM 6899 / JCM 31910 / BCRC 17059 / LMG 24140 / F1), this protein is Response regulator protein TodT (todT).